The chain runs to 157 residues: Protein-export protein SecB (157 aa).

This sequence belongs to the SecB family. Homotetramer, a dimer of dimers. One homotetramer interacts with 1 SecA dimer.

The protein localises to the cytoplasm. One of the proteins required for the normal export of preproteins out of the cell cytoplasm. It is a molecular chaperone that binds to a subset of precursor proteins, maintaining them in a translocation-competent state. It also specifically binds to its receptor SecA. This Rhodopseudomonas palustris (strain TIE-1) protein is Protein-export protein SecB.